The following is a 472-amino-acid chain: Glutamate--tRNA ligase (472 aa).

Positions 10 to 20 (PSPTGYLHVGG) match the 'HIGH' region motif. Zn(2+) is bound by residues Cys99, Cys101, Cys126, and Asp128. Positions 238-242 (KLSKR) match the 'KMSKS' region motif. Lys241 contributes to the ATP binding site.

This sequence belongs to the class-I aminoacyl-tRNA synthetase family. Glutamate--tRNA ligase type 1 subfamily. Monomer. Zn(2+) serves as cofactor.

The protein localises to the cytoplasm. The catalysed reaction is tRNA(Glu) + L-glutamate + ATP = L-glutamyl-tRNA(Glu) + AMP + diphosphate. Catalyzes the attachment of glutamate to tRNA(Glu) in a two-step reaction: glutamate is first activated by ATP to form Glu-AMP and then transferred to the acceptor end of tRNA(Glu). In Photorhabdus laumondii subsp. laumondii (strain DSM 15139 / CIP 105565 / TT01) (Photorhabdus luminescens subsp. laumondii), this protein is Glutamate--tRNA ligase.